Reading from the N-terminus, the 273-residue chain is Cbp/p300-interacting transactivator 2 (273 aa).

Residues 137-204 are disordered; that stretch reads DLHPAAGHQM…GSGGSGSSNM (68 aa). Gly residues predominate over residues 165-200; sequence STPGGSGGSSTPGGSGGSAGGGAGSSNSGGGSGGSG.

It belongs to the CITED family. Interacts (via C-terminus) with SMAD2. Interacts (via C-terminus) with SMAD3 (via MH2 domain). Interacts with LHX2 (via LIM domains). Interacts with WT1. Interacts (via C-terminus) with EP300 (via CH1 domain); the interaction is stimulated in response to hypoxia. Interacts with PPARA. Interacts (via C-terminus) with TFAP2A, TFAP2B and TFAP2C.

The protein localises to the nucleus. Its function is as follows. Transcriptional coactivator of the p300/CBP-mediated transcription complex. Acts as a bridge, linking TFAP2 transcription factors and the p300/CBP transcriptional coactivator complex in order to stimulate TFAP2-mediated transcriptional activation. Positively regulates TGF-beta signaling through its association with the SMAD/p300/CBP-mediated transcriptional coactivator complex. Stimulates the peroxisome proliferator-activated receptors PPARA transcriptional activity. Enhances estrogen-dependent transactivation mediated by estrogen receptors. Also acts as a transcriptional corepressor; interferes with the binding of the transcription factors HIF1A or STAT2 and the p300/CBP transcriptional coactivator complex. Participates in sex determination and early gonad development by stimulating transcription activation of SRY. Plays a role in controlling left-right patterning during embryogenesis; potentiates transcriptional activation of NODAL-mediated gene transcription in the left lateral plate mesoderm (LPM). Plays an essential role in differentiation of the adrenal cortex from the adrenogonadal primordium (AGP); stimulates WT1-mediated transcription activation thereby up-regulating the nuclear hormone receptor NR5A1 promoter activity. Associates with chromatin to the PITX2 P1 promoter region. This chain is Cbp/p300-interacting transactivator 2 (CITED2), found in Saguinus labiatus (Red-chested mustached tamarin).